Reading from the N-terminus, the 26-residue chain is Delta-hemolysin (26 aa).

Met1 is modified (N-formylmethionine).

Belongs to the delta-lysin family.

It is found in the secreted. Its subcellular location is the host cell membrane. Functionally, lyses erythrocytes and many other mammalian cells. This chain is Delta-hemolysin (hld), found in Staphylococcus aureus (strain MSSA476).